Here is a 286-residue protein sequence, read N- to C-terminus: tRNA dimethylallyltransferase (286 aa).

An interaction with substrate tRNA region spans residues 18–21 (DSMQ).

It belongs to the IPP transferase family. In terms of assembly, monomer. Mg(2+) serves as cofactor.

The catalysed reaction is adenosine(37) in tRNA + dimethylallyl diphosphate = N(6)-dimethylallyladenosine(37) in tRNA + diphosphate. Its function is as follows. Catalyzes the transfer of a dimethylallyl group onto the adenine at position 37 in tRNAs that read codons beginning with uridine, leading to the formation of N6-(dimethylallyl)adenosine (i(6)A). The protein is tRNA dimethylallyltransferase of Tropheryma whipplei (strain TW08/27) (Whipple's bacillus).